The chain runs to 146 residues: uncharacterized protein (146 aa).

This is an uncharacterized protein from Sinorhizobium fredii (strain NBRC 101917 / NGR234).